A 498-amino-acid chain; its full sequence is GTPase Der (498 aa).

2 EngA-type G domains span residues 3 to 167 and 210 to 383; these read PVVA…FDDL and IKLA…KSAT. GTP contacts are provided by residues 9–16, 57–61, 119–122, 216–223, 263–267, and 328–331; these read GRPNVGKS, DTGGI, NKID, DTAGV, and NKWD. The 85-residue stretch at 384 to 468 folds into the KH-like domain; it reads TRVGTSVLTR…PIRINFQNSE (85 aa).

This sequence belongs to the TRAFAC class TrmE-Era-EngA-EngB-Septin-like GTPase superfamily. EngA (Der) GTPase family. Associates with the 50S ribosomal subunit.

GTPase that plays an essential role in the late steps of ribosome biogenesis. This is GTPase Der from Vibrio parahaemolyticus serotype O3:K6 (strain RIMD 2210633).